The primary structure comprises 231 residues: Eukaryotic translation initiation factor 4E-1 (231 aa).

2 EIF4G-binding regions span residues 56–59 (HPLE) and 66–102 (FDNP…NNIH). Residues 74–79 (RQTAWG), lysine 106, and 124–125 (WE) contribute to the mRNA site. Cysteine 129 and cysteine 167 are oxidised to a cystine. An EIF4G-binding region spans residues 150-159 (YTLLAMIGHQ). MRNA contacts are provided by residues 174 to 179 (RAKGEK) and 219 to 223 (KRLDR).

The protein belongs to the eukaryotic initiation factor 4E family. As to quaternary structure, EIF4F is a multi-subunit complex, the composition of which varies with external and internal environmental conditions. It is composed of at least EIF4A, EIF4E and EIF4G. EIF4E is also known to interact with other partners. In higher plants two isoforms of EIF4F have been identified, named isoform EIF4F and isoform EIF(iso)4F. Isoform EIF4F has subunits p220 and p26, whereas isoform EIF(iso)4F has subunits p82 and p28. In terms of assembly, (Microbial infection) Interacts with potyvirus viral genome-linked protein (VPg); mostly with tobacco etch virus (TEV-HAT) VPg and, to a lower extent, with potato virus Y (PVY-LYE84 and PVY-LYE90) and pepper mottle virus (PepMoV) VPg. Post-translationally, according to the redox status, the Cys-129-Cys-167 disulfide bridge may have a role in regulating protein function by affecting its ability to bind capped mRNA.

Its subcellular location is the nucleus. The protein resides in the cytoplasm. Its function is as follows. Component of the protein complex eIF4F, which is involved in the recognition of the mRNA cap, ATP-dependent unwinding of 5'-terminal secondary structure and recruitment of mRNA to the ribosome. Recognizes and binds the 7-methylguanosine-containing mRNA cap during an early step in the initiation of protein synthesis and facilitates ribosome binding by inducing the unwinding of the mRNAs secondary structures. Key component of recessive resistance to potyviruses. (Microbial infection) Susceptibility host factor required for viral infection (e.g. potato virus Y (PVY), pepper mottle virus (PepMoV) and tobacco etch virus (TEV)) by recruiting viral RNAs to the host ribosomal complex via an interaction with viral genome-linked protein (VPg). The sequence is that of Eukaryotic translation initiation factor 4E-1 from Solanum lycopersicum (Tomato).